We begin with the raw amino-acid sequence, 530 residues long: Na(+)/H(+) antiporter NhaB (530 aa).

The next 10 helical transmembrane spans lie at 13–33, 67–87, 90–110, 138–158, 205–225, 245–265, 302–333, 350–370, 449–469, and 477–497; these read FLGQ…LINP, PGGL…ETVL, VVGN…IYFL, AAAL…VIAV, LLMH…VGEP, MAPI…FLEF, LVIQ…VIIL, FEEA…VAVI, VATP…LAPL, and MVIM…VMTA.

Belongs to the NhaB Na(+)/H(+) (TC 2.A.34) antiporter family.

It is found in the cell inner membrane. The enzyme catalyses 2 Na(+)(in) + 3 H(+)(out) = 2 Na(+)(out) + 3 H(+)(in). Na(+)/H(+) antiporter that extrudes sodium in exchange for external protons. This is Na(+)/H(+) antiporter NhaB from Alcanivorax borkumensis (strain ATCC 700651 / DSM 11573 / NCIMB 13689 / SK2).